The sequence spans 155 residues: Endoribonuclease YbeY (155 aa).

Residues His114, His118, and His124 each coordinate Zn(2+).

It belongs to the endoribonuclease YbeY family. It depends on Zn(2+) as a cofactor.

The protein resides in the cytoplasm. In terms of biological role, single strand-specific metallo-endoribonuclease involved in late-stage 70S ribosome quality control and in maturation of the 3' terminus of the 16S rRNA. This is Endoribonuclease YbeY from Salmonella arizonae (strain ATCC BAA-731 / CDC346-86 / RSK2980).